The sequence spans 265 residues: GTP cyclohydrolase FolE2 (265 aa).

Belongs to the GTP cyclohydrolase IV family.

It catalyses the reaction GTP + H2O = 7,8-dihydroneopterin 3'-triphosphate + formate + H(+). Its pathway is cofactor biosynthesis; 7,8-dihydroneopterin triphosphate biosynthesis; 7,8-dihydroneopterin triphosphate from GTP: step 1/1. Converts GTP to 7,8-dihydroneopterin triphosphate. In Bordetella petrii (strain ATCC BAA-461 / DSM 12804 / CCUG 43448), this protein is GTP cyclohydrolase FolE2.